Consider the following 88-residue polypeptide: Gas vesicle protein A2 (88 aa).

This sequence belongs to the gas vesicle GvpA family. In terms of assembly, the gas vesicle shell is 2 nm thick and consists of a single layer of this protein. It forms helical ribs nearly perpendicular to the long axis of the vesicle.

The protein resides in the gas vesicle shell. Its function is as follows. Gas vesicles are hollow, gas filled proteinaceous nanostructures found in some microorganisms. During planktonic growth they allow positioning of the organism at a favorable depth for light or nutrient acquisition. GvpA forms the protein shell. In terms of biological role, it is not clear if the 2 type A proteins in this organism are functionally redundant. Functionally, when a minimal gvp locus (gvpA2-gvpR-gvpN-gvpF-gvpG-gvpL-gvpS-gvpK-gvpJ-gvpT-gvpU, called pNL29) is expressed in E.coli gas vesicles are made. This Priestia megaterium (Bacillus megaterium) protein is Gas vesicle protein A2.